Reading from the N-terminus, the 447-residue chain is Serine/threonine-protein phosphatase 2A 55 kDa regulatory subunit B alpha isoform (447 aa).

A2 carries the post-translational modification N-acetylalanine. WD repeat units follow at residues 11-80 (QWCF…FQSH), 94-174 (EKIN…IFAN), 175-218 (AHTY…VDIK), 227-270 (EVIT…KLFE), 288-325 (ISDV…TYQV), 347-381 (ECCW…TLEA), and 414-446 (DFNK…QDKV).

The protein belongs to the phosphatase 2A regulatory subunit B family. In terms of assembly, PP2A consists of a common heterodimeric core enzyme, composed of a 36 kDa catalytic subunit (subunit C) and a 65 kDa constant regulatory subunit (PR65 or subunit A), that associates with a variety of regulatory subunits. Proteins that associate with the core dimer include three families of regulatory subunits B (the R2/B/PR55/B55, R3/B''/PR72/PR130/PR59 and R5/B'/B56 families), the 48 kDa variable regulatory subunit, viral proteins, and cell signaling molecules. Interacts with the PP2A C catalytic subunit PPP2CA. Interacts with the PP2A A subunit PPP2R1A. Interacts with TP53. Interacts with IER5. Interacts with MFHAS1; the interaction is direct. Interacts with PABIR1/FAM122A (via its N-terminus); the interaction is direct and inhibits PP2A activity. Interacts with ARPP19; the interaction is direct and inhibits PP2A activity. Interacts with CRTC3. Expressed in all tissues examined.

In terms of biological role, substrate-recognition subunit of protein phosphatase 2A (PP2A) that plays a key role in cell cycle by controlling mitosis entry and exit. Involved in chromosome clustering during late mitosis by mediating dephosphorylation of MKI67. Essential for serine/threonine-protein phosphatase 2A-mediated dephosphorylation of WEE1, preventing its ubiquitin-mediated proteolysis, increasing WEE1 protein levels, and promoting the G2/M checkpoint. This chain is Serine/threonine-protein phosphatase 2A 55 kDa regulatory subunit B alpha isoform (PPP2R2A), found in Homo sapiens (Human).